Reading from the N-terminus, the 313-residue chain is Ribosomal RNA small subunit methyltransferase H (313 aa).

S-adenosyl-L-methionine contacts are provided by residues 35-37 (GGH), D55, F79, D100, and Q107.

It belongs to the methyltransferase superfamily. RsmH family.

The protein localises to the cytoplasm. It carries out the reaction cytidine(1402) in 16S rRNA + S-adenosyl-L-methionine = N(4)-methylcytidine(1402) in 16S rRNA + S-adenosyl-L-homocysteine + H(+). Functionally, specifically methylates the N4 position of cytidine in position 1402 (C1402) of 16S rRNA. The protein is Ribosomal RNA small subunit methyltransferase H of Burkholderia vietnamiensis (strain G4 / LMG 22486) (Burkholderia cepacia (strain R1808)).